Here is a 754-residue protein sequence, read N- to C-terminus: Exocyst complex component EXO84A (754 aa).

2 disordered regions span residues 514–540 and 734–754; these read RILP…EQRE and GHGE…YTSN. Over residues 518–527 the composition is skewed to polar residues; the sequence is QGTSQSTPRR. Basic and acidic residues predominate over residues 528-540; the sequence is GSSDRQNRPEQRE. The segment covering 741-754 has biased composition (polar residues); that stretch reads TSPSVSSAKSYTSN.

The protein belongs to the EXO84 family. In terms of assembly, the exocyst complex is composed of SEC3, SEC5, SEC6, SEC8, SEC10, EXO70A1 and EXO84.

Its function is as follows. Component of the exocyst complex involved in the docking of exocytic vesicles with fusion sites on the plasma membrane during regulated or polarized secretion. Involved in polarized cell growth and organ morphogenesis. During cytokinesis, involved in cell plate initiation, cell plate maturation and formation of new primary cell wall. This Arabidopsis thaliana (Mouse-ear cress) protein is Exocyst complex component EXO84A (EXO84A).